A 106-amino-acid polypeptide reads, in one-letter code: Large ribosomal subunit protein uL24 (106 aa).

It belongs to the universal ribosomal protein uL24 family. In terms of assembly, part of the 50S ribosomal subunit.

Functionally, one of two assembly initiator proteins, it binds directly to the 5'-end of the 23S rRNA, where it nucleates assembly of the 50S subunit. In terms of biological role, one of the proteins that surrounds the polypeptide exit tunnel on the outside of the subunit. In Gluconobacter oxydans (strain 621H) (Gluconobacter suboxydans), this protein is Large ribosomal subunit protein uL24.